A 245-amino-acid polypeptide reads, in one-letter code: tRNA (guanine-N(7)-)-methyltransferase (245 aa).

S-adenosyl-L-methionine is bound by residues glutamate 75, glutamate 100, aspartate 127, and aspartate 150. The active site involves aspartate 150. Residues lysine 154, aspartate 186, and 223–226 (TKFE) each bind substrate.

Belongs to the class I-like SAM-binding methyltransferase superfamily. TrmB family.

It catalyses the reaction guanosine(46) in tRNA + S-adenosyl-L-methionine = N(7)-methylguanosine(46) in tRNA + S-adenosyl-L-homocysteine. It functions in the pathway tRNA modification; N(7)-methylguanine-tRNA biosynthesis. Functionally, catalyzes the formation of N(7)-methylguanine at position 46 (m7G46) in tRNA. The chain is tRNA (guanine-N(7)-)-methyltransferase from Photobacterium profundum (strain SS9).